A 453-amino-acid polypeptide reads, in one-letter code: Probable exopolygalacturonase B (453 aa).

A signal peptide spans 1-16; sequence MKFFALAALFASTVNS. Residues Asn-185 and Asn-225 are each glycosylated (N-linked (GlcNAc...) asparagine). Asp-255 (proton donor) is an active-site residue. Cysteines 257 and 274 form a disulfide. N-linked (GlcNAc...) asparagine glycans are attached at residues Asn-263 and Asn-275. The active site involves His-278. 2 PbH1 repeats span residues 295-316 and 327-348; these read IENV…RLKA and INNV…VLDQ. N-linked (GlcNAc...) asparagine glycosylation is found at Asn-302, Asn-329, Asn-354, and Asn-366. One copy of the PbH1 3 repeat lies at 362–405; sequence PSRVNFTNIVFEDIYGTSSGKRGKVVADLTCSPNAVCSGIRLKN. Cys-392 and Cys-398 are oxidised to a cystine. N-linked (GlcNAc...) asparagine glycosylation occurs at Asn-436.

This sequence belongs to the glycosyl hydrolase 28 family.

The protein localises to the secreted. It carries out the reaction [(1-&gt;4)-alpha-D-galacturonosyl](n) + H2O = alpha-D-galacturonate + [(1-&gt;4)-alpha-D-galacturonosyl](n-1). Functionally, specific in hydrolyzing the terminal glycosidic bond of polygalacturonic acid and oligogalacturonates. The sequence is that of Probable exopolygalacturonase B (pgxB) from Aspergillus fumigatus (strain ATCC MYA-4609 / CBS 101355 / FGSC A1100 / Af293) (Neosartorya fumigata).